The chain runs to 599 residues: MVSNCLSLSLHLNLHPHKHNRHSLSSLRSRTKAKLYQHVSFTDSSHKSSYTSCVSTFDIQRKSSKHYELGKHSFSPILPGDNLVLSRSGVIRPRLSAMTGSEINDHGYDESQFDPSLTNDDLKPTTPSQRTFSWLDMSSLWIGLVVGVPTYYLAGSLVDLGMAWWQGIATVVTANLILLVPLVLTAQPGTLYGISFPVLARSSFGIRGAHIPTLLRALVGCGWYGIETWIGGEAIFLLLPGHIKKSALSHTLPWLGTSPLEFSCFIVFWLAQLCIVWRGMDGIRKLEKYSAPILISLTSCLLAWSYLKAGGFGHMLSLSSKLTSAQFWTLFFPSLTANISFWATLALNIPDFSRFAKSQTDQIIGQVGLPVFMGLFTFVGVAVTSSTSIIFGRVISNPIELLGQIGGLATTLLAIVGISLATLTTNIAANVVAPANALVNLNPKFFTFGRGAFLTAVLGIVFQPWRLLKSSESFVYTWLIGYSALLGPIGGIILVDYYLIKKMKLNIGDLYSLSPSGEYYFSKGYNVAAVVALVAGIIPVVPGFLHKISALSKISNGFVVVYDNALFFSFIIAGFVYWIIMSRLGRKQSSLSSSSHPLL.

Transmembrane regions (helical) follow at residues 140–160, 164–184, 218–238, 257–277, 293–313, 327–347, 363–383, 411–433, 445–465, 474–494, 525–545, and 560–580; these read LWIG…LVDL, WWQG…PLVL, LVGC…IFLL, TSPL…CIVW, ILIS…GGFG, FWTL…TLAL, IIGQ…GVAV, TLLA…NVVA, FFTF…FQPW, FVYT…GIIL, YNVA…PGFL, and VVYD…YWII.

The protein belongs to the purine-cytosine permease (2.A.39) family. In terms of tissue distribution, expressed in roots, leaves, stems, flowers, siliques and seeds.

It localises to the plastid. The protein resides in the chloroplast envelope. Its subcellular location is the chloroplast membrane. Nucleobase-proton symporter that facilitates the uptake of nucleobases in the cells. Can transport adenine, guanine and uracil. Contributes to uracil import into plastids for plastidic uracil salvage which is essential for plant growth and development. The chain is Purine-uracil permease NCS1 from Arabidopsis thaliana (Mouse-ear cress).